The chain runs to 233 residues: 5'-methylthioadenosine/S-adenosylhomocysteine nucleosidase (233 aa).

Catalysis depends on E12, which acts as the Proton acceptor. Residues G78, I156, and 177 to 178 contribute to the substrate site; that span reads ME. Catalysis depends on D201, which acts as the Proton donor.

The protein belongs to the PNP/UDP phosphorylase family. MtnN subfamily.

The catalysed reaction is S-adenosyl-L-homocysteine + H2O = S-(5-deoxy-D-ribos-5-yl)-L-homocysteine + adenine. It catalyses the reaction S-methyl-5'-thioadenosine + H2O = 5-(methylsulfanyl)-D-ribose + adenine. It carries out the reaction 5'-deoxyadenosine + H2O = 5-deoxy-D-ribose + adenine. Its pathway is amino-acid biosynthesis; L-methionine biosynthesis via salvage pathway; S-methyl-5-thio-alpha-D-ribose 1-phosphate from S-methyl-5'-thioadenosine (hydrolase route): step 1/2. Functionally, catalyzes the irreversible cleavage of the glycosidic bond in both 5'-methylthioadenosine (MTA) and S-adenosylhomocysteine (SAH/AdoHcy) to adenine and the corresponding thioribose, 5'-methylthioribose and S-ribosylhomocysteine, respectively. Also cleaves 5'-deoxyadenosine, a toxic by-product of radical S-adenosylmethionine (SAM) enzymes, into 5-deoxyribose and adenine. The chain is 5'-methylthioadenosine/S-adenosylhomocysteine nucleosidase from Listeria monocytogenes serotype 4a (strain HCC23).